We begin with the raw amino-acid sequence, 172 residues long: Ribosome maturation factor RimM (172 aa).

The 73-residue stretch at 96-168 folds into the PRC barrel domain; sequence DGEFYYHEII…RVQVELMEGL (73 aa).

Belongs to the RimM family. As to quaternary structure, binds ribosomal protein uS19.

The protein resides in the cytoplasm. Functionally, an accessory protein needed during the final step in the assembly of 30S ribosomal subunit, possibly for assembly of the head region. Essential for efficient processing of 16S rRNA. May be needed both before and after RbfA during the maturation of 16S rRNA. It has affinity for free ribosomal 30S subunits but not for 70S ribosomes. This chain is Ribosome maturation factor RimM, found in Streptococcus agalactiae serotype Ia (strain ATCC 27591 / A909 / CDC SS700).